The chain runs to 424 residues: Deoxyguanosinetriphosphate triphosphohydrolase-like protein (424 aa).

Residues 1–27 (MYPYSDADAFRRQPERAKSSQLRTSAV) are disordered. Basic and acidic residues predominate over residues 8–18 (DAFRRQPERAK). The HD domain occupies 67–217 (RLTHSLEVAQ…MDFSDDIAYS (151 aa)).

It belongs to the dGTPase family. Type 2 subfamily.

The chain is Deoxyguanosinetriphosphate triphosphohydrolase-like protein (dgt) from Corynebacterium glutamicum (strain ATCC 13032 / DSM 20300 / JCM 1318 / BCRC 11384 / CCUG 27702 / LMG 3730 / NBRC 12168 / NCIMB 10025 / NRRL B-2784 / 534).